A 205-amino-acid polypeptide reads, in one-letter code: MIGRLRGVLVEKQAPEILLEVAGLGYEVQMPLTSFYELPDLNQEAQIYTHFVVREDAQLLYGFITKQERALFRLLIKTNGVGPKLGLTILSGMTAGEFVACVERDDIATLVKLPGVGKKTAERLLVEMRDKLKSLLETSAGSEREFMLKSNYTPAPVVNTAEEDAIAALLSLGYKPAQASKAVSAAFKEGMSSEDLIKSSLKSML.

A domain I region spans residues 1–64 (MIGRLRGVLV…EDAQLLYGFI (64 aa)). Positions 65–143 (TKQERALFRL…SLLETSAGSE (79 aa)) are domain II. A flexible linker region spans residues 144–156 (REFMLKSNYTPAP). The interval 157–205 (VVNTAEEDAIAALLSLGYKPAQASKAVSAAFKEGMSSEDLIKSSLKSML) is domain III.

Belongs to the RuvA family. As to quaternary structure, homotetramer. Forms an RuvA(8)-RuvB(12)-Holliday junction (HJ) complex. HJ DNA is sandwiched between 2 RuvA tetramers; dsDNA enters through RuvA and exits via RuvB. An RuvB hexamer assembles on each DNA strand where it exits the tetramer. Each RuvB hexamer is contacted by two RuvA subunits (via domain III) on 2 adjacent RuvB subunits; this complex drives branch migration. In the full resolvosome a probable DNA-RuvA(4)-RuvB(12)-RuvC(2) complex forms which resolves the HJ.

It is found in the cytoplasm. The RuvA-RuvB-RuvC complex processes Holliday junction (HJ) DNA during genetic recombination and DNA repair, while the RuvA-RuvB complex plays an important role in the rescue of blocked DNA replication forks via replication fork reversal (RFR). RuvA specifically binds to HJ cruciform DNA, conferring on it an open structure. The RuvB hexamer acts as an ATP-dependent pump, pulling dsDNA into and through the RuvAB complex. HJ branch migration allows RuvC to scan DNA until it finds its consensus sequence, where it cleaves and resolves the cruciform DNA. The polypeptide is Holliday junction branch migration complex subunit RuvA (Shewanella woodyi (strain ATCC 51908 / MS32)).